Consider the following 458-residue polypeptide: MSHTDTIVAQATPIGRGGIGILRISGCATKTVAKEILGKLPRARYAEYLAFKDPEGNILDQGIALYFPAPHSFTGEDVLELQGHGGPIILDLLLKAILNLPDVCVRIARPGEFSERAFLNDKLDLVQAEAVADLIDASTEQAARCALHSLKGTFSLRINQLIESLTYLRVYIEASMDFSDEEIDFLSDGKIETQLDRVIHDLDKVRSEARQGQLLREGMKIVIAGRPNVGKSSLLNALTGRETAIVTQIPGTTRDVLREQIQINGMPLHIIDTAGLRETEDPVEKIGIERAWNEIEQADRILFIVDGSTSSEKTIYPLWPEWEARLSRSRLPITLIRNKSDITGEDVALTETEEGTFISLSARTGEGIDLLREHLQQTMGFSGNMEGGFLARRRHLEALENAAQYLLSARQKWSSGNFLSELLAEELRLAQQVLSEITGQVSSNDLLGIIFSSFCIGK.

Residues R23, E80, and K122 each coordinate (6S)-5-formyl-5,6,7,8-tetrahydrofolate. Positions 218–380 (GMKIVIAGRP…LREHLQQTMG (163 aa)) constitute a TrmE-type G domain. Residue N228 coordinates K(+). Residues 228–233 (NVGKSS), 247–253 (TQIPGTT), 272–275 (DTAG), and 361–363 (SAR) each bind GTP. S232 provides a ligand contact to Mg(2+). Residues T247, I249, and T252 each contribute to the K(+) site. Residue T253 participates in Mg(2+) binding. K458 is a binding site for (6S)-5-formyl-5,6,7,8-tetrahydrofolate.

Belongs to the TRAFAC class TrmE-Era-EngA-EngB-Septin-like GTPase superfamily. TrmE GTPase family. As to quaternary structure, homodimer. Heterotetramer of two MnmE and two MnmG subunits. It depends on K(+) as a cofactor.

Its subcellular location is the cytoplasm. Its function is as follows. Exhibits a very high intrinsic GTPase hydrolysis rate. Involved in the addition of a carboxymethylaminomethyl (cmnm) group at the wobble position (U34) of certain tRNAs, forming tRNA-cmnm(5)s(2)U34. In Hamiltonella defensa subsp. Acyrthosiphon pisum (strain 5AT), this protein is tRNA modification GTPase MnmE.